A 164-amino-acid polypeptide reads, in one-letter code: Large ribosomal subunit protein uL10 (164 aa).

Belongs to the universal ribosomal protein uL10 family. As to quaternary structure, part of the ribosomal stalk of the 50S ribosomal subunit. The N-terminus interacts with L11 and the large rRNA to form the base of the stalk. The C-terminus forms an elongated spine to which L12 dimers bind in a sequential fashion forming a multimeric L10(L12)X complex.

Functionally, forms part of the ribosomal stalk, playing a central role in the interaction of the ribosome with GTP-bound translation factors. In Helicobacter pylori (strain ATCC 700392 / 26695) (Campylobacter pylori), this protein is Large ribosomal subunit protein uL10 (rplJ).